The following is a 515-amino-acid chain: Cell division control protein 6 homolog (515 aa).

The span at 1–24 shows a compositional bias: low complexity; sequence MPTLRSATASASTAGTASPTAIAT. A disordered region spans residues 1–70; it reads MPTLRSATAS…TPKLLSASPR (70 aa). The span at 43–52 shows a compositional bias: polar residues; that stretch reads DASQFTSPHK.

The protein belongs to the CDC6/cdc18 family.

It is found in the nucleus. May be involved in the initiation of DNA replication. This chain is Cell division control protein 6 homolog, found in Oryza sativa subsp. japonica (Rice).